The chain runs to 243 residues: Terpene cyclase atmB (243 aa).

7 consecutive transmembrane segments (helical) span residues 19 to 39 (IADVFVIGMGIGWIINYVGMV), 48 to 68 (YGMAIMPLCCNIAWEIVYGLI), 78 to 98 (GVFLSGLTINLGVIYTAIKFG), 112 to 132 (LPLIFMLGILGFLTGHLALAA), 134 to 154 (IGPALAYNWGAAFCQLLLSVG), 169 to 189 (SYTLWLSRFLGSFSVVISAWL), and 205 to 225 (LILWCLFAWLVVDGSYGVCFY).

The protein belongs to the paxB family.

The protein resides in the membrane. Functionally, terpene cyclase; part of the ATM2 gene cluster that mediates the biosynthesis of aflatrem, a tremorgenic mycotoxin with acute neurotoxic effects. Synthesis of geranylgeranyl diphosphate (GGPP) by AtmG (a GGPP synthase) precedes condensation of GGPP with indole 3-glycerol phosphate, followed by epoxidation and cyclization by AtmM (a FAD-dependent monooxygenase) and AtmC (a prenyltransferase) to produce paspaline. AtmB is also essential for paspaline production, but its exact role has not been identified yet. AtmP, a cytochrome P450 monooxygenase, subsequently converts paspaline to 13-desoxypaxilline via PC-M6 by removal of the C-30 methyl group and oxidation at C-10. AtmQ, a cytochrome P450 monooxygenase, then catalyzes the oxidation of 13-desoxypaxilline, first at C-7 to produce paspalicine and then at C-13 to form paspalinine. Finally, AtmD prenylates paspalinine to form aflatrem. The polypeptide is Terpene cyclase atmB (Aspergillus flavus).